Here is a 467-residue protein sequence, read N- to C-terminus: Asparagine--tRNA ligase (467 aa).

Belongs to the class-II aminoacyl-tRNA synthetase family. In terms of assembly, homodimer.

The protein localises to the cytoplasm. It carries out the reaction tRNA(Asn) + L-asparagine + ATP = L-asparaginyl-tRNA(Asn) + AMP + diphosphate + H(+). The polypeptide is Asparagine--tRNA ligase (Haemophilus ducreyi (strain 35000HP / ATCC 700724)).